Consider the following 460-residue polypeptide: Dihydroorotate dehydrogenase (quinone), mitochondrial (460 aa).

The transit peptide at 1–32 (MAGRAATSSAKWAREFLFRRVSSNPLGATRNC) directs the protein to the mitochondrion. Residues 53 to 69 (ILTGATIGLAIAGGAYV) traverse the membrane as a helical segment. Residues 141–145 (AGFDK) and Ser-165 each bind FMN. Position 145 (Lys-145) interacts with substrate. Residue 190-194 (NRCGF) coordinates substrate. The disordered stretch occupies residues 213–245 (RMLAETSATSSSPSDDVKPGGKSGPGILGVNLG). Residues Asn-243 and Asn-274 each coordinate FMN. Substrate is bound at residue 274-279 (NVSSPN). The active-site Nucleophile is Ser-277. Lys-319 and Ser-347 together coordinate FMN. 348–349 (NT) contacts substrate. Residues Gly-371, Gly-400, and 421-422 (YT) each bind FMN.

It belongs to the dihydroorotate dehydrogenase family. Type 2 subfamily. Requires FMN as cofactor.

It localises to the mitochondrion inner membrane. It carries out the reaction (S)-dihydroorotate + a quinone = orotate + a quinol. The protein operates within pyrimidine metabolism; UMP biosynthesis via de novo pathway; orotate from (S)-dihydroorotate (quinone route): step 1/1. In terms of biological role, catalyzes the conversion of dihydroorotate to orotate with quinone as electron acceptor. The polypeptide is Dihydroorotate dehydrogenase (quinone), mitochondrial (PYRD) (Arabidopsis thaliana (Mouse-ear cress)).